A 156-amino-acid chain; its full sequence is Small ribosomal subunit protein uS7 (156 aa).

The protein belongs to the universal ribosomal protein uS7 family. Part of the 30S ribosomal subunit. Contacts proteins S9 and S11.

One of the primary rRNA binding proteins, it binds directly to 16S rRNA where it nucleates assembly of the head domain of the 30S subunit. Is located at the subunit interface close to the decoding center, probably blocks exit of the E-site tRNA. The polypeptide is Small ribosomal subunit protein uS7 (Sorangium cellulosum (strain So ce56) (Polyangium cellulosum (strain So ce56))).